The following is a 333-amino-acid chain: Holliday junction branch migration complex subunit RuvB (333 aa).

A large ATPase domain (RuvB-L) region spans residues 1–182; it reads MDERLLSGES…FGVLSRLEYY (182 aa). Residues Leu21, Arg22, Gly63, Lys66, Thr67, Thr68, 129-131, Arg172, Tyr182, and Arg219 each bind ATP; that span reads EDF. A Mg(2+)-binding site is contributed by Thr67. The small ATPAse domain (RuvB-S) stretch occupies residues 183 to 253; that stretch reads TVDQLSEIVE…ITQMALELLQ (71 aa). A head domain (RuvB-H) region spans residues 256-333; that stretch reads KLGLDHIDHK…EHFGMEMPKV (78 aa). Positions 311 and 316 each coordinate DNA.

This sequence belongs to the RuvB family. Homohexamer. Forms an RuvA(8)-RuvB(12)-Holliday junction (HJ) complex. HJ DNA is sandwiched between 2 RuvA tetramers; dsDNA enters through RuvA and exits via RuvB. An RuvB hexamer assembles on each DNA strand where it exits the tetramer. Each RuvB hexamer is contacted by two RuvA subunits (via domain III) on 2 adjacent RuvB subunits; this complex drives branch migration. In the full resolvosome a probable DNA-RuvA(4)-RuvB(12)-RuvC(2) complex forms which resolves the HJ.

It is found in the cytoplasm. The enzyme catalyses ATP + H2O = ADP + phosphate + H(+). In terms of biological role, the RuvA-RuvB-RuvC complex processes Holliday junction (HJ) DNA during genetic recombination and DNA repair, while the RuvA-RuvB complex plays an important role in the rescue of blocked DNA replication forks via replication fork reversal (RFR). RuvA specifically binds to HJ cruciform DNA, conferring on it an open structure. The RuvB hexamer acts as an ATP-dependent pump, pulling dsDNA into and through the RuvAB complex. RuvB forms 2 homohexamers on either side of HJ DNA bound by 1 or 2 RuvA tetramers; 4 subunits per hexamer contact DNA at a time. Coordinated motions by a converter formed by DNA-disengaged RuvB subunits stimulates ATP hydrolysis and nucleotide exchange. Immobilization of the converter enables RuvB to convert the ATP-contained energy into a lever motion, pulling 2 nucleotides of DNA out of the RuvA tetramer per ATP hydrolyzed, thus driving DNA branch migration. The RuvB motors rotate together with the DNA substrate, which together with the progressing nucleotide cycle form the mechanistic basis for DNA recombination by continuous HJ branch migration. Branch migration allows RuvC to scan DNA until it finds its consensus sequence, where it cleaves and resolves cruciform DNA. The sequence is that of Holliday junction branch migration complex subunit RuvB from Bacillus cereus (strain ATCC 10987 / NRS 248).